Reading from the N-terminus, the 743-residue chain is Polyribonucleotide nucleotidyltransferase (743 aa).

Asp489 and Asp495 together coordinate Mg(2+). Residues 556–618 (PRIEKMHIGK…PCIDAAIGMI (63 aa)) enclose the KH domain. One can recognise an S1 motif domain in the interval 628–698 (GETYPGKITS…KTGKFKLSRK (71 aa)). Positions 704-743 (PEGYVEPQPRERRERREGGREGGRNFERRGGDRDHREPRG) are disordered.

Belongs to the polyribonucleotide nucleotidyltransferase family. It depends on Mg(2+) as a cofactor.

It localises to the cytoplasm. It catalyses the reaction RNA(n+1) + phosphate = RNA(n) + a ribonucleoside 5'-diphosphate. Its function is as follows. Involved in mRNA degradation. Catalyzes the phosphorolysis of single-stranded polyribonucleotides processively in the 3'- to 5'-direction. This chain is Polyribonucleotide nucleotidyltransferase, found in Porphyromonas gingivalis (strain ATCC BAA-308 / W83).